The chain runs to 865 residues: Alanine--tRNA ligase (865 aa).

Zn(2+) contacts are provided by histidine 554, histidine 558, cysteine 656, and histidine 660.

This sequence belongs to the class-II aminoacyl-tRNA synthetase family. Zn(2+) is required as a cofactor.

The protein resides in the cytoplasm. The enzyme catalyses tRNA(Ala) + L-alanine + ATP = L-alanyl-tRNA(Ala) + AMP + diphosphate. In terms of biological role, catalyzes the attachment of alanine to tRNA(Ala) in a two-step reaction: alanine is first activated by ATP to form Ala-AMP and then transferred to the acceptor end of tRNA(Ala). Also edits incorrectly charged Ser-tRNA(Ala) and Gly-tRNA(Ala) via its editing domain. This chain is Alanine--tRNA ligase, found in Francisella tularensis subsp. tularensis (strain WY96-3418).